The following is a 382-amino-acid chain: F-box/kelch-repeat protein KIB1 (382 aa).

Residues 22-69 form the F-box domain; sequence SKHSILAVDLVRLILERLSFVDFHRARCVSSIWYIASKTVIGVTNPTT. Kelch repeat units lie at residues 73 to 117, 159 to 209, and 259 to 306; these read ILFP…ASSG, VLWV…FKEN, and IVAK…ITVE.

In terms of assembly, part of a SCF (SKP1-cullin-F-box) protein ligase complex. Binds directly to several GSK3 family proteins such as SKP1A/ASK1, ASK1/SK11, ASK3/SK12, ASK5/SK13, ASK7/BIN2/SK21, ASK9/SK22 and ASK6/SK23. Interacts with ASK7/BIN2/SK21 in a brassinosteroid (BR)-dependent manner. In terms of tissue distribution, expressed in seedlings, leaves, stems, flower buds and flowers.

It localises to the cytoplasm. Its subcellular location is the nucleus. The protein localises to the nucleolus. Its function is as follows. Component of SCF(ASK-cullin-F-box) E3 ubiquitin ligase complexes, which may mediate the ubiquitination and subsequent proteasomal degradation of target proteins. Required for brassinosteroid (BR) signal transduction. Mediates ASK7/BIN2/SK21 inactivation both by competing with substrate binding (e.g. BZR1) and by promoting its ubiquitination and subsequent proteasomal degradation. The chain is F-box/kelch-repeat protein KIB1 from Arabidopsis thaliana (Mouse-ear cress).